The chain runs to 159 residues: Large ribosomal subunit protein uL15 (159 aa).

A compositionally biased stretch (basic and acidic residues) spans 1-18 (MKLNEIRDNEGSSKDRIR). A disordered region spans residues 1–37 (MKLNEIRDNEGSSKDRIRVGRGIGSGKGKTGGRGVKG). The segment covering 21–35 (RGIGSGKGKTGGRGV) has biased composition (gly residues).

The protein belongs to the universal ribosomal protein uL15 family. As to quaternary structure, part of the 50S ribosomal subunit.

In terms of biological role, binds to the 23S rRNA. This is Large ribosomal subunit protein uL15 from Agrobacterium fabrum (strain C58 / ATCC 33970) (Agrobacterium tumefaciens (strain C58)).